The following is a 524-amino-acid chain: 11-oxo-beta-amyrin 30-oxidase (524 aa).

The helical transmembrane segment at 9–29 threads the bilayer; the sequence is GTTVIISVLSVLLAVIPWYLL. Position 472 (Cys472) interacts with heme.

Belongs to the cytochrome P450 family. It depends on heme as a cofactor. In terms of tissue distribution, expressed in flowers. Detected in roots upon salt treatment.

It localises to the membrane. The enzyme catalyses 11-oxo-beta-amyrin + 3 reduced [NADPH--hemoprotein reductase] + 3 O2 = glycyrrhetinate + 3 oxidized [NADPH--hemoprotein reductase] + 4 H2O + 4 H(+). Its function is as follows. Involved in the biosynthesis of triterpenoid saponins. Catalyzes three sequential oxidation steps at C-30 of 11-oxo-beta-amyrin. Also able to catalyze sequential C-30 hydroxylation of beta-amyrin to produce 30-hydroxy-beta-amyrin and 11-deoxoglycyrrhetinic acid. This Medicago truncatula (Barrel medic) protein is 11-oxo-beta-amyrin 30-oxidase (CYP72A63).